The following is a 551-amino-acid chain: MEEEVPGFYGESGKSVQATLSSLKMLDVGKWPIFSLCSEEELQLIRQACVFGSAGNEVLYTTVNDEIFVLGTNCSGCLGVGDIQSTIEPRRLDSLTGKKIASLSYGSGPHIVLATTDGEVFTWGHNAYSQLGNGTTNHGLVPCHISTNLSNKQVIEVACGSYHSLVLTSDGEVFAWGYNNSGQVGSGSTANQPIPRRVTGCLQNKVVMNIACGQMCSMAVVDTGEVYVWGYNGNGQLGLGSSGNQPTPCRVAALQGIRVQRVACGYAHTLVLTDEGQIYAWGANSYGQLGTGNKSNQSYPTPVVVEKDRIIEIAACHSAHTSAAKTQGGHVYMWGQCRGQSVILPHHTHFCCTDDVFACFATPAVTWRLLSVEPDDHLTVAESLKREFDNPDTADLKFLVDGKYIYAHKVLLKIRCEHFRSSLEDSEDDIVEMSEFSYPVFRAFLEYLYTDNISLSPEEAVGLLDLATFYSETRLKKLCQQTIKQGICEENAIALLSAAVKYDAQDLEEFCFRFCINHLTVVTQTSGFAEMDHDLLKNFISKASRVGAFKN.

RCC1 repeat units lie at residues 64 to 115, 117 to 169, 171 to 222, 223 to 274, 276 to 326, and 328 to 382; these read NDEI…VLAT, DGEV…VLTS, GEVF…AVVD, TGEV…VLTD, GQIY…AAKT, and GGHV…TVAE. The 64-residue stretch at 394–457 folds into the BTB domain; sequence ADLKFLVDGK…LYTDNISLSP (64 aa).

Expressed in testis and heart (at protein level).

It is found in the cytoplasmic vesicle. The protein resides in the secretory vesicle. The protein localises to the acrosome. The protein is RCC1 and BTB domain-containing protein 2 (Rcbtb2) of Mus musculus (Mouse).